A 478-amino-acid polypeptide reads, in one-letter code: Sulfate adenylyltransferase subunit 1 (478 aa).

In terms of domain architecture, tr-type G spans 28-244 (KTMLRFLTCG…LESVDVVNAS (217 aa)). A G1 region spans residues 37–44 (GSVDDGKS). 37–44 (GSVDDGKS) contributes to the GTP binding site. The tract at residues 95–99 (GITID) is G2. The interval 116–119 (DTPG) is G3. Residues 116 to 120 (DTPGH) and 171 to 174 (NKMD) contribute to the GTP site. The interval 171-174 (NKMD) is G4. The tract at residues 209-211 (SAL) is G5.

Belongs to the TRAFAC class translation factor GTPase superfamily. Classic translation factor GTPase family. CysN/NodQ subfamily. As to quaternary structure, heterodimer composed of CysD, the smaller subunit, and CysN.

The enzyme catalyses sulfate + ATP + H(+) = adenosine 5'-phosphosulfate + diphosphate. It participates in sulfur metabolism; hydrogen sulfide biosynthesis; sulfite from sulfate: step 1/3. Its function is as follows. With CysD forms the ATP sulfurylase (ATPS) that catalyzes the adenylation of sulfate producing adenosine 5'-phosphosulfate (APS) and diphosphate, the first enzymatic step in sulfur assimilation pathway. APS synthesis involves the formation of a high-energy phosphoric-sulfuric acid anhydride bond driven by GTP hydrolysis by CysN coupled to ATP hydrolysis by CysD. The sequence is that of Sulfate adenylyltransferase subunit 1 from Yersinia enterocolitica serotype O:8 / biotype 1B (strain NCTC 13174 / 8081).